Here is a 1826-residue protein sequence, read N- to C-terminus: MDYKKGEHSPSSSIQILSDDATINSNYAYGEQLQSNDQYNNIQHPAPSFANPFIHEQDDSYSDILEEEPDEDAYDSPERPSSTEEFISQDESNISAGSSFMFPYNRGHPLSKRHDSIMVDEFGHEYIVEGDSIASADEAIDYDALYASWTAETKAPILAIDIENIYIELAMKFGFQWDNMRNMFDYLMVMLDSRASRMTPQEALLTLHADYIGGPQSNFKKWYFACKMDQFDLKSGVLSFISRDPSTQVPYKDMSSCEALWISRMDELSNYERIEQLALYLLCWGEANNVRFMPECLCFIYKVAYDYLISPSFKEQKNPAPKDYFLDNCITPLYNLMHDQQYEIRDQKYVRKEKDHASIIGYDDINQMFWYSKGLKALLLSDGSRIMDADVASRYFLLADIQWQRVCYKSFRESRTWLHFLHNFSRIWILHISVFWYFTVYNSPTIYTPNFHYLEGTQPARAAKWCAPALAGAVASFISFLALILEAYFVPRNNPGAQPVIPRLIFVSILIALNIVPAAFIFGFSNATQQHYRSREIVGYVHFFFSIGCVAYQSFIPLPFLLGPRFKFRSSSRKYLANSYFTNDIASLPWGRTLLSAALWITVFIAKFVESYYFLTLSVRDPIRFLQRMKPYDCYDFMIGASLCSHQPKFLLSLVYLTDLVLFFLDTYLWYMLISTMFSIAYSFYMGSAIWTPWRVIFSNLPRRIYFTLLAYKDLSTEFKPKIYVGQIWNSIMISMYREHLLSLEHLKGLLYQQVGSEYFGKQTFQSPKFFMEAAKGLNKWDAFFRRNSEAERRISFFAQSLGGKIPDAVPVPKMPSFTVLIPHYGEKILLSLREIIREQDPMSRITLLEYLKQLYPNDWDNFVQDTKLMAGDVGVEETKSDVKSEKGKKQGTVKEDLPFYCIGFKSTAPEYTLRTRIWASLRSQTLYRTASGMMNYSRALKLLYRVEQPNLLDDCDGNFERLEHQLEQMAYRKFRLCISMQRYAKFNRDEYENAEFLLRAHPELQIAYLDQDPSEDGEEPKVYATLINGFCPFENGRRLPKYRIRLSGNPILGDGKADNQNMALPFVRGEYLQLIDANQDNYIEECMKIRNVLSEFEEMDCATLTPYTKKGNARHPVAMLGAREYVFSENSGILGDVAAGKEQTFGTLFSRSLALIGGKLHYGHPDFLNTIFMTTRGGVSKAQKGLHVNEDIYAGMTALQRGGRIKHCDYFQCGKGRDLGFGTIINFTTKIGTGMGEQSLSREYFYLGTQLPFFRMLSFYYAHAGFHLNNVFIMISMQLLMLVFVNLGAMYHTVEICDYQAGAAINASLYPPGCYMLKPVLDWIRRCIISIFIVFFISFLPLVVHDLLEKGVIRAVARLCKQIFSLSPMFEVFVTQNYANSIFTNLTYGGARYIATGRGLATTRVPFSVLYSLYTGSSIYLGSRLIMMLLFGTMTVWTTHYVYFWVTMFALVICPFIYNPHQFSFVDFFVDYREFLRWLSRGNTKGHAHSWIGFCRLARTRITGVNRKVKGSPSNKLTMDMPRAGLRNVIFTEVFLPACFAFFTICAYTFMNSQPGLEDKSRAVNGFIRIWIMAALPIAISTAALLILLMFSCMLGPLLRKCSKRYGAVLAALAHAVSVFGLVFTFEALWFLEAWSFSKTVLGCIVIFAIHRLVFKLVVVFLLPREVASGENNYSWWDGHWFGRKGIPYMPIQFIREFMCKVVEMNLFAMDFILSHCILFSLTPILCIPFIDIPHSVLLFWLHPSRQIRPPIYTRKQNQLRRRTFYRYSLLFFALLCTFVAMIVVPLVLDQKLSYQFKFENSVKFFRLMQPSLGVLPNTNKNTSE.

The segment covering 34-43 has biased composition (polar residues); sequence QSNDQYNNIQ. The interval 34–90 is disordered; it reads QSNDQYNNIQHPAPSFANPFIHEQDDSYSDILEEEPDEDAYDSPERPSSTEEFISQD. Residues 59 to 75 are compositionally biased toward acidic residues; that stretch reads DSYSDILEEEPDEDAYD. Transmembrane regions (helical) follow at residues 427-447, 465-485, 504-524, 543-563, 597-617, 637-657, and 660-680; these read IWIL…PTIY, WCAP…ALIL, LIFV…IFGF, FFFS…FLLG, AALW…FLTL, FMIG…LVYL, and LVLF…MFSI. Serine 885 bears the Phosphoserine mark. The next 11 helical transmembrane spans lie at 1272–1292, 1329–1349, 1375–1397, 1417–1437, 1438–1458, 1531–1551, 1571–1591, 1607–1627, 1642–1662, 1701–1721, and 1770–1790; these read VFIM…GAMY, IISI…HDLL, VTQN…YIAT, GSSI…TMTV, WTTH…CPFI, IFTE…AYTF, IWIM…ILLM, YGAV…VFTF, VLGC…VVVF, CKVV…CILF, and SLLF…PLVL.

Belongs to the glycosyltransferase 48 family. In terms of assembly, component of the 1,3-beta-glucan synthase (GS) complex, composed of at least the alternate catalytic subunits bgs1, bgs2, bgs3, and bgs4, and a regulatory subunit chr4.

It localises to the membrane. The enzyme catalyses [(1-&gt;3)-beta-D-glucosyl](n) + UDP-alpha-D-glucose = [(1-&gt;3)-beta-D-glucosyl](n+1) + UDP + H(+). Its function is as follows. Alternate catalytic subunit of the 1,3-beta-glucan synthase (GS) complex. Synthesizes 1,3-beta-glucan, a major structural component of the yeast cell wall. Required for cell wall biosynthesis and cell elongation. The sequence is that of 1,3-beta-glucan synthase component bgs3 from Schizosaccharomyces pombe (strain 972 / ATCC 24843) (Fission yeast).